The chain runs to 87 residues: MANHKSAIKRHKQSQKRAARNRAAKTRIKNVVKAVRAAVLQKDKDTAAQALTAAMSVLDKAAGKGVIHWKKAARKISRLTKAVGSVE.

Residues 1 to 26 are disordered; that stretch reads MANHKSAIKRHKQSQKRAARNRAAKT.

The protein belongs to the bacterial ribosomal protein bS20 family.

Binds directly to 16S ribosomal RNA. The protein is Small ribosomal subunit protein bS20 of Nitratidesulfovibrio vulgaris (strain DSM 19637 / Miyazaki F) (Desulfovibrio vulgaris).